A 479-amino-acid chain; its full sequence is UDP-N-acetylmuramoyl-L-alanyl-D-glutamate--2,6-diaminopimelate ligase (479 aa).

Ser21 is a binding site for UDP-N-acetyl-alpha-D-muramoyl-L-alanyl-D-glutamate. ATP is bound at residue 98-104; the sequence is GTNGKSS. Residues 144–145, Ser171, Gln177, and Arg179 each bind UDP-N-acetyl-alpha-D-muramoyl-L-alanyl-D-glutamate; that span reads TT. N6-carboxylysine is present on Lys211. Meso-2,6-diaminopimelate is bound by residues Arg372, 396–399, Gly446, and Glu450; that span reads DNPR. A Meso-diaminopimelate recognition motif motif is present at residues 396–399; sequence DNPR.

This sequence belongs to the MurCDEF family. MurE subfamily. It depends on Mg(2+) as a cofactor. Post-translationally, carboxylation is probably crucial for Mg(2+) binding and, consequently, for the gamma-phosphate positioning of ATP.

The protein resides in the cytoplasm. The catalysed reaction is UDP-N-acetyl-alpha-D-muramoyl-L-alanyl-D-glutamate + meso-2,6-diaminopimelate + ATP = UDP-N-acetyl-alpha-D-muramoyl-L-alanyl-gamma-D-glutamyl-meso-2,6-diaminopimelate + ADP + phosphate + H(+). Its pathway is cell wall biogenesis; peptidoglycan biosynthesis. In terms of biological role, catalyzes the addition of meso-diaminopimelic acid to the nucleotide precursor UDP-N-acetylmuramoyl-L-alanyl-D-glutamate (UMAG) in the biosynthesis of bacterial cell-wall peptidoglycan. This is UDP-N-acetylmuramoyl-L-alanyl-D-glutamate--2,6-diaminopimelate ligase from Rickettsia montanensis.